The chain runs to 285 residues: Nucleotide-binding protein Pfl01_0854 (285 aa).

8 to 15 lines the ATP pocket; that stretch reads GRSGSGKS. Residue 60 to 63 participates in GTP binding; sequence DARN.

It belongs to the RapZ-like family.

Displays ATPase and GTPase activities. The polypeptide is Nucleotide-binding protein Pfl01_0854 (Pseudomonas fluorescens (strain Pf0-1)).